The sequence spans 862 residues: Valine--tRNA ligase (862 aa).

A 'HIGH' region motif is present at residues 43 to 53 (PTVSGALHVGH). Residues 459 to 494 (ERPILPDDAALPVDPSSDTPTGYHDSQRHQPGGFMA) are disordered. Residues 574 to 578 (KMSKS) carry the 'KMSKS' region motif. An ATP-binding site is contributed by Lys-577.

The protein belongs to the class-I aminoacyl-tRNA synthetase family. ValS type 2 subfamily. In terms of assembly, monomer.

The protein localises to the cytoplasm. The catalysed reaction is tRNA(Val) + L-valine + ATP = L-valyl-tRNA(Val) + AMP + diphosphate. Its function is as follows. Catalyzes the attachment of valine to tRNA(Val). As ValRS can inadvertently accommodate and process structurally similar amino acids such as threonine, to avoid such errors, it has a 'posttransfer' editing activity that hydrolyzes mischarged Thr-tRNA(Val) in a tRNA-dependent manner. The chain is Valine--tRNA ligase from Salinispora arenicola (strain CNS-205).